The chain runs to 147 residues: Large ribosomal subunit protein uL15 (147 aa).

A disordered region spans residues 1-42 (MTIKVHHLRPAPGAKTAKTRVGRGEGSKGKTAGRGTKGSKAR).

The protein belongs to the universal ribosomal protein uL15 family. As to quaternary structure, part of the 50S ribosomal subunit.

Its function is as follows. Binds to the 23S rRNA. The protein is Large ribosomal subunit protein uL15 of Salinispora arenicola (strain CNS-205).